The sequence spans 261 residues: Triosephosphate isomerase (261 aa).

Residue 10–12 (NWK) coordinates substrate. H100 acts as the Electrophile in catalysis. Catalysis depends on E172, which acts as the Proton acceptor. Substrate contacts are provided by residues G178, S218, and 239-240 (GG).

This sequence belongs to the triosephosphate isomerase family. In terms of assembly, homodimer.

It is found in the cytoplasm. It carries out the reaction D-glyceraldehyde 3-phosphate = dihydroxyacetone phosphate. It participates in carbohydrate biosynthesis; gluconeogenesis. It functions in the pathway carbohydrate degradation; glycolysis; D-glyceraldehyde 3-phosphate from glycerone phosphate: step 1/1. Its function is as follows. Involved in the gluconeogenesis. Catalyzes stereospecifically the conversion of dihydroxyacetone phosphate (DHAP) to D-glyceraldehyde-3-phosphate (G3P). The polypeptide is Triosephosphate isomerase (Mycobacterium sp. (strain JLS)).